The following is a 136-amino-acid chain: Small ribosomal subunit protein uS8c (136 aa).

Belongs to the universal ribosomal protein uS8 family. Part of the 30S ribosomal subunit.

Its subcellular location is the plastid. The protein localises to the chloroplast. Functionally, one of the primary rRNA binding proteins, it binds directly to 16S rRNA central domain where it helps coordinate assembly of the platform of the 30S subunit. This Saccharum officinarum (Sugarcane) protein is Small ribosomal subunit protein uS8c (rps8).